Here is a 157-residue protein sequence, read N- to C-terminus: SsrA-binding protein (157 aa).

The protein belongs to the SmpB family.

The protein resides in the cytoplasm. Required for rescue of stalled ribosomes mediated by trans-translation. Binds to transfer-messenger RNA (tmRNA), required for stable association of tmRNA with ribosomes. tmRNA and SmpB together mimic tRNA shape, replacing the anticodon stem-loop with SmpB. tmRNA is encoded by the ssrA gene; the 2 termini fold to resemble tRNA(Ala) and it encodes a 'tag peptide', a short internal open reading frame. During trans-translation Ala-aminoacylated tmRNA acts like a tRNA, entering the A-site of stalled ribosomes, displacing the stalled mRNA. The ribosome then switches to translate the ORF on the tmRNA; the nascent peptide is terminated with the 'tag peptide' encoded by the tmRNA and targeted for degradation. The ribosome is freed to recommence translation, which seems to be the essential function of trans-translation. The chain is SsrA-binding protein from Chlorobium chlorochromatii (strain CaD3).